A 393-amino-acid chain; its full sequence is Sister chromatid cohesion protein DCC1 (393 aa).

Belongs to the DCC1 family. As to quaternary structure, component of the CTF18-RFC complex which consists of CTF8, CTF18, DSCC1 and the RFC complex. Interacts with CTF8 and CTF18. Interacts with DDX11.

The protein resides in the nucleus. Loads PCNA onto primed templates regulating velocity, spacing and restart activity of replication forks. May couple DNA replication to sister chromatid cohesion through regulation of the acetylation of the cohesin subunit SMC3. The sequence is that of Sister chromatid cohesion protein DCC1 (DSCC1) from Homo sapiens (Human).